A 410-amino-acid chain; its full sequence is Peptidase T-like protein YPO1009/y3403/YP_3421 (410 aa).

His82 is a binding site for Zn(2+). Asp84 is a catalytic residue. Asp144 serves as a coordination point for Zn(2+). Catalysis depends on Glu176, which acts as the Proton acceptor. Zn(2+) is bound by residues Glu177, Asp200, and His382.

The protein belongs to the peptidase M20B family. Zn(2+) is required as a cofactor.

The chain is Peptidase T-like protein YPO1009/y3403/YP_3421 from Yersinia pestis.